The following is a 324-amino-acid chain: tRNA dimethylallyltransferase (324 aa).

17-24 provides a ligand contact to ATP; it reads GPTASGKT. A substrate-binding site is contributed by 19–24; sequence TASGKT. Interaction with substrate tRNA regions lie at residues 42–45, 166–170, 251–256, and 284–291; these read DSAL, QRIQR, RCVGYR, and KRQITWLR.

This sequence belongs to the IPP transferase family. In terms of assembly, monomer. It depends on Mg(2+) as a cofactor.

The enzyme catalyses adenosine(37) in tRNA + dimethylallyl diphosphate = N(6)-dimethylallyladenosine(37) in tRNA + diphosphate. In terms of biological role, catalyzes the transfer of a dimethylallyl group onto the adenine at position 37 in tRNAs that read codons beginning with uridine, leading to the formation of N6-(dimethylallyl)adenosine (i(6)A). This chain is tRNA dimethylallyltransferase, found in Burkholderia lata (strain ATCC 17760 / DSM 23089 / LMG 22485 / NCIMB 9086 / R18194 / 383).